Here is a 174-residue protein sequence, read N- to C-terminus: Co-chaperone protein HscB homolog (174 aa).

The J domain maps to 2–74 (NYFDLFNVVP…LRRAEHMLSL (73 aa)).

Belongs to the HscB family. Interacts with HscA and stimulates its ATPase activity.

Its function is as follows. Co-chaperone involved in the maturation of iron-sulfur cluster-containing proteins. Seems to help targeting proteins to be folded toward HscA. The polypeptide is Co-chaperone protein HscB homolog (Shewanella frigidimarina (strain NCIMB 400)).